Here is a 260-residue protein sequence, read N- to C-terminus: Circadian clock-controlled protein daywake (260 aa).

The first 25 residues, 1-25, serve as a signal peptide directing secretion; the sequence is MQLTGASMFLVWVGLLSWVSCRVDA.

Belongs to the TO family. In terms of tissue distribution, epidermis of newly eclosed adults.

In terms of biological role, component of the circadian clock or downstream effector of clock function. Required for suppressing daytime sleep (siesta) under ambient environmental temperatures. Part of a heat avoidance mechanism that modulates daytime sleep behavior under different environmental temperatures to minimize the risk of heat exposure. Under cooler ambient temperatures, suppresses daytime sleep (siesta) and thus allows for longer periods of daytime activity. The chain is Circadian clock-controlled protein daywake from Drosophila melanogaster (Fruit fly).